Consider the following 184-residue polypeptide: dCTP deaminase (184 aa).

DCTP contacts are provided by residues 107-112, 131-133, Gln152, Tyr166, and Gln176; these read KSTYAR and TLE. Glu133 acts as the Proton donor/acceptor in catalysis.

It belongs to the dCTP deaminase family. As to quaternary structure, homotrimer.

It carries out the reaction dCTP + H2O + H(+) = dUTP + NH4(+). It participates in pyrimidine metabolism; dUMP biosynthesis; dUMP from dCTP (dUTP route): step 1/2. Its function is as follows. Catalyzes the deamination of dCTP to dUTP. The protein is dCTP deaminase of Rhizorhabdus wittichii (strain DSM 6014 / CCUG 31198 / JCM 15750 / NBRC 105917 / EY 4224 / RW1) (Sphingomonas wittichii).